A 489-amino-acid chain; its full sequence is Sphingolipid C9-methyltransferase (489 aa).

Helical transmembrane passes span 29 to 49 (GAKNFSNWLLLGLLTGVPLFV) and 59 to 79 (TFIFFFILFAIPILMAYWTVL). Residues 202–203 (YT), 239–247 (LLDLGCGWG), 265–270 (TLGKNQ), and 295–296 (YR) each bind S-adenosyl-L-methionine.

It belongs to the CFA/CMAS family.

The protein resides in the membrane. The catalysed reaction is a (4E,8E)-4-sphinga-4,8-dienine ceramide + S-adenosyl-L-methionine = a 9-methyl-(4E,8E)-sphinga-4,8-dienine ceramide + S-adenosyl-L-homocysteine + H(+). Its pathway is lipid metabolism; sphingolipid metabolism. Functionally, catalyzes methylation of the sphingoid base component of glucosylceramides (GluCers) at the C9-position. Sphingolipid C9-methylation requires 4,8-desaturated ceramides as substrates. Glucosylceramides play important roles in growth, differentiation and pathogenicity. The methyl group at the C9-position distinguishes fungal glucosylceramides from those of plants and animals, and may thus play a role in host-pathogen interactions enabling the host to recognize the fungal attack and initiate specific defense responses. This Komagataella phaffii (strain GS115 / ATCC 20864) (Yeast) protein is Sphingolipid C9-methyltransferase.